Reading from the N-terminus, the 262-residue chain is Ferric siderophore reductase (262 aa).

The [2Fe-2S] cluster site is built by C244, C245, C256, and C259.

As to quaternary structure, monomer. [2Fe-2S] cluster serves as cofactor.

It is found in the cytoplasm. The protein resides in the cell inner membrane. Its activity is regulated as follows. Displays pH dependent redox properties. SufD is necessary for the stability of FhuF. In terms of biological role, siderophore-iron reductase which is involved in iron removal from the hydroxamate-type siderophores coprogen, ferrichrome and ferrioxamine B after their transport into the cell. Binds both the iron-loaded and the apo forms of ferrichrome. The polypeptide is Ferric siderophore reductase (fhuF) (Escherichia coli (strain K12)).